Consider the following 400-residue polypeptide: 1-deoxy-D-xylulose 5-phosphate reductoisomerase (400 aa).

NADPH contacts are provided by Thr10, Gly11, Ser12, Ile13, Gly36, Asn38, and Asn124. Position 125 (Lys125) interacts with 1-deoxy-D-xylulose 5-phosphate. An NADPH-binding site is contributed by Glu126. Asp150 serves as a coordination point for Mn(2+). 1-deoxy-D-xylulose 5-phosphate is bound by residues Ser151, Glu152, Ser186, and His209. Residue Glu152 participates in Mn(2+) binding. An NADPH-binding site is contributed by Gly215. Ser222, Asn227, Lys228, and Glu231 together coordinate 1-deoxy-D-xylulose 5-phosphate. A Mn(2+)-binding site is contributed by Glu231.

It belongs to the DXR family. Requires Mg(2+) as cofactor. The cofactor is Mn(2+).

The catalysed reaction is 2-C-methyl-D-erythritol 4-phosphate + NADP(+) = 1-deoxy-D-xylulose 5-phosphate + NADPH + H(+). The protein operates within isoprenoid biosynthesis; isopentenyl diphosphate biosynthesis via DXP pathway; isopentenyl diphosphate from 1-deoxy-D-xylulose 5-phosphate: step 1/6. Its function is as follows. Catalyzes the NADPH-dependent rearrangement and reduction of 1-deoxy-D-xylulose-5-phosphate (DXP) to 2-C-methyl-D-erythritol 4-phosphate (MEP). The protein is 1-deoxy-D-xylulose 5-phosphate reductoisomerase of Aliivibrio fischeri (strain MJ11) (Vibrio fischeri).